The chain runs to 344 residues: Putative esterase NocK (344 aa).

The segment at residues 1–34 (MIGVTRRSGLALAVLVSSAACAGAEPVAPPPAPA) is a signal peptide (tat-type signal). Residues 265–295 (GGADERRREEARPAAAPGGTSTSRETCANPD) form a disordered region. A compositionally biased stretch (basic and acidic residues) spans 266–276 (GADERRREEAR).

Belongs to the AB hydrolase superfamily. Post-translationally, predicted to be exported by the Tat system. The position of the signal peptide cleavage has not been experimentally proven.

In Nocardia uniformis subsp. tsuyamanensis, this protein is Putative esterase NocK.